A 370-amino-acid chain; its full sequence is S-adenosylmethionine:tRNA ribosyltransferase-isomerase (370 aa).

The protein belongs to the QueA family. In terms of assembly, monomer.

The protein resides in the cytoplasm. It catalyses the reaction 7-aminomethyl-7-carbaguanosine(34) in tRNA + S-adenosyl-L-methionine = epoxyqueuosine(34) in tRNA + adenine + L-methionine + 2 H(+). The protein operates within tRNA modification; tRNA-queuosine biosynthesis. Its function is as follows. Transfers and isomerizes the ribose moiety from AdoMet to the 7-aminomethyl group of 7-deazaguanine (preQ1-tRNA) to give epoxyqueuosine (oQ-tRNA). This chain is S-adenosylmethionine:tRNA ribosyltransferase-isomerase, found in Synechococcus sp. (strain WH7803).